The primary structure comprises 162 residues: uncharacterized protein (162 aa).

Residues 1 to 21 form the signal peptide; sequence MRLCGLLIFLSYIVYVDNAVT.

This is an uncharacterized protein from Caenorhabditis elegans.